The chain runs to 117 residues: Large ribosomal subunit protein bL20c (117 aa).

This sequence belongs to the bacterial ribosomal protein bL20 family.

It localises to the plastid. The protein resides in the chloroplast. Binds directly to 23S ribosomal RNA and is necessary for the in vitro assembly process of the 50S ribosomal subunit. It is not involved in the protein synthesizing functions of that subunit. The protein is Large ribosomal subunit protein bL20c of Gossypium hirsutum (Upland cotton).